A 459-amino-acid chain; its full sequence is MYRKALLGSTRLDILSYISSMEEDREIVEEVIECLIAHVKGLIHSKLIPEEEGEKILKALEELRASKEALFSIEAEDIHEAIEIYLKEKLGKTGGYLPLGRSRNDHVVCALRLKAKKALVEEIGLILELRKALIKKAEENVYTLMPLFTHLQPAQPSTFAHYLSAIIEELEDITKILFSGLGIVDKSSLGAGAIGGTSVLLDRGYMGGILFSDIITNSLYATSSRTFLLYSCFLSVLISIALSRIAEDFVIFSTPNFGYIKLPNEHLSTSSMMPQKKNPVTMEVARAWAGEAIGHLVAMMSILKALPSGYNLDMQEVNKHAFALFSGTIKTLKIFVDAMKRVEVNKENMKKDCDIFPILATDYAEKIAMNTGRPYREVYMEVASIIGEHESTEKIYSELSSKYGISISLEEGIKKPVVGSPNPEDVLEFLEKAKKNVEKDEKKLEELRQNENRDNVYNP.

The disordered stretch occupies residues 440–459 (DEKKLEELRQNENRDNVYNP).

The protein belongs to the lyase 1 family. Argininosuccinate lyase subfamily.

Its subcellular location is the cytoplasm. It catalyses the reaction 2-(N(omega)-L-arginino)succinate = fumarate + L-arginine. It functions in the pathway amino-acid biosynthesis; L-arginine biosynthesis; L-arginine from L-ornithine and carbamoyl phosphate: step 3/3. In Pyrococcus furiosus (strain ATCC 43587 / DSM 3638 / JCM 8422 / Vc1), this protein is Argininosuccinate lyase.